The sequence spans 271 residues: NADPH-dependent 7-cyano-7-deazaguanine reductase (271 aa).

81 to 83 (IES) lines the substrate pocket. 83–84 (SK) lines the NADPH pocket. Cys-177 (thioimide intermediate) is an active-site residue. Residue Asp-184 is the Proton donor of the active site. 216 to 217 (HE) lines the substrate pocket. Position 245-246 (245-246 (RG)) interacts with NADPH.

This sequence belongs to the GTP cyclohydrolase I family. QueF type 2 subfamily. In terms of assembly, homodimer.

Its subcellular location is the cytoplasm. The catalysed reaction is 7-aminomethyl-7-carbaguanine + 2 NADP(+) = 7-cyano-7-deazaguanine + 2 NADPH + 3 H(+). The protein operates within tRNA modification; tRNA-queuosine biosynthesis. Its function is as follows. Catalyzes the NADPH-dependent reduction of 7-cyano-7-deazaguanine (preQ0) to 7-aminomethyl-7-deazaguanine (preQ1). The chain is NADPH-dependent 7-cyano-7-deazaguanine reductase from Xanthomonas oryzae pv. oryzae (strain MAFF 311018).